Consider the following 382-residue polypeptide: Galactokinase (382 aa).

34 to 37 contacts substrate; that stretch reads EHTD. 124 to 130 lines the ATP pocket; that stretch reads GAGLSSS. Mg(2+)-binding residues include Ser-130 and Glu-162. The active-site Proton acceptor is the Asp-174. Substrate is bound at residue Tyr-223.

The protein belongs to the GHMP kinase family. GalK subfamily.

It is found in the cytoplasm. It carries out the reaction alpha-D-galactose + ATP = alpha-D-galactose 1-phosphate + ADP + H(+). It functions in the pathway carbohydrate metabolism; galactose metabolism. Catalyzes the transfer of the gamma-phosphate of ATP to D-galactose to form alpha-D-galactose-1-phosphate (Gal-1-P). In Salmonella choleraesuis (strain SC-B67), this protein is Galactokinase.